Consider the following 168-residue polypeptide: MTQLIMGIDPGTLVSGYAIIHIEQRYKIRAHSYGAIRLSSKDSLTQRYKQLFQTLSGVLDDITPDAVVLETQYVHKNPQSTIKLGMARGVLILAAALRDIPVFEYAPNVAKRAVVGKGNASKQQVQLMVSKILNIPDVLNSNCEDIADAFALAICHAHTSAYTCLGVR.

Catalysis depends on residues D9, E70, and D145. 3 residues coordinate Mg(2+): D9, E70, and D145.

This sequence belongs to the RuvC family. As to quaternary structure, homodimer which binds Holliday junction (HJ) DNA. The HJ becomes 2-fold symmetrical on binding to RuvC with unstacked arms; it has a different conformation from HJ DNA in complex with RuvA. In the full resolvosome a probable DNA-RuvA(4)-RuvB(12)-RuvC(2) complex forms which resolves the HJ. Mg(2+) serves as cofactor.

It is found in the cytoplasm. The catalysed reaction is Endonucleolytic cleavage at a junction such as a reciprocal single-stranded crossover between two homologous DNA duplexes (Holliday junction).. Its function is as follows. The RuvA-RuvB-RuvC complex processes Holliday junction (HJ) DNA during genetic recombination and DNA repair. Endonuclease that resolves HJ intermediates. Cleaves cruciform DNA by making single-stranded nicks across the HJ at symmetrical positions within the homologous arms, yielding a 5'-phosphate and a 3'-hydroxyl group; requires a central core of homology in the junction. The consensus cleavage sequence is 5'-(A/T)TT(C/G)-3'. Cleavage occurs on the 3'-side of the TT dinucleotide at the point of strand exchange. HJ branch migration catalyzed by RuvA-RuvB allows RuvC to scan DNA until it finds its consensus sequence, where it cleaves and resolves the cruciform DNA. The polypeptide is Crossover junction endodeoxyribonuclease RuvC (Chlamydia caviae (strain ATCC VR-813 / DSM 19441 / 03DC25 / GPIC) (Chlamydophila caviae)).